Here is a 135-residue protein sequence, read N- to C-terminus: MSLTLRVLAPDKNVFDGIAEEVILPSTTGLLGILPGHISMVTAIDTGVLRVRTNGNWDSIALMGGFAEVESDEVTVLVNAAELASEINASDAESEFEQAKTEFGQLEGQENSTQKIKAKEMLNRARARVQATKSA.

This sequence belongs to the ATPase epsilon chain family. As to quaternary structure, F-type ATPases have 2 components, CF(1) - the catalytic core - and CF(0) - the membrane proton channel. CF(1) has five subunits: alpha(3), beta(3), gamma(1), delta(1), epsilon(1). CF(0) has three main subunits: a, b and c.

It is found in the cellular thylakoid membrane. Its function is as follows. Produces ATP from ADP in the presence of a proton gradient across the membrane. This chain is ATP synthase epsilon chain, found in Prochlorococcus marinus (strain MIT 9211).